Here is a 359-residue protein sequence, read N- to C-terminus: GTP 3',8-cyclase (359 aa).

Residues 33 to 260 (RFGRRHDSLR…PTGRENPSAP (228 aa)) form the Radical SAM core domain. Arginine 42 provides a ligand contact to GTP. [4Fe-4S] cluster-binding residues include cysteine 49 and cysteine 53. Tyrosine 55 is a binding site for S-adenosyl-L-methionine. Cysteine 56 contributes to the [4Fe-4S] cluster binding site. Arginine 93 serves as a coordination point for GTP. Glycine 97 is an S-adenosyl-L-methionine binding site. Threonine 124 serves as a coordination point for GTP. Serine 148 lines the S-adenosyl-L-methionine pocket. Position 185 (lysine 185) interacts with GTP. S-adenosyl-L-methionine is bound at residue methionine 219. Cysteine 286 and cysteine 289 together coordinate [4Fe-4S] cluster. 291 to 293 (RLR) provides a ligand contact to GTP. Cysteine 303 contributes to the [4Fe-4S] cluster binding site.

The protein belongs to the radical SAM superfamily. MoaA family. In terms of assembly, monomer and homodimer. [4Fe-4S] cluster is required as a cofactor.

It catalyses the reaction GTP + AH2 + S-adenosyl-L-methionine = (8S)-3',8-cyclo-7,8-dihydroguanosine 5'-triphosphate + 5'-deoxyadenosine + L-methionine + A + H(+). The protein operates within cofactor biosynthesis; molybdopterin biosynthesis. Functionally, catalyzes the cyclization of GTP to (8S)-3',8-cyclo-7,8-dihydroguanosine 5'-triphosphate. This chain is GTP 3',8-cyclase, found in Rhodopirellula baltica (strain DSM 10527 / NCIMB 13988 / SH1).